Reading from the N-terminus, the 287-residue chain is ATP synthase gamma chain (287 aa).

Belongs to the ATPase gamma chain family. F-type ATPases have 2 components, CF(1) - the catalytic core - and CF(0) - the membrane proton channel. CF(1) has five subunits: alpha(3), beta(3), gamma(1), delta(1), epsilon(1). CF(0) has three main subunits: a, b and c.

Its subcellular location is the cell inner membrane. Functionally, produces ATP from ADP in the presence of a proton gradient across the membrane. The gamma chain is believed to be important in regulating ATPase activity and the flow of protons through the CF(0) complex. The chain is ATP synthase gamma chain from Klebsiella pneumoniae (strain 342).